The following is a 476-amino-acid chain: Bifunctional protein HldE (476 aa).

Residues 1–319 (MKVSLPAFEK…EALALHHGES (319 aa)) form a ribokinase region. Residue 195-198 (NMSE) coordinates ATP. D264 is an active-site residue. Residues 345–476 (MTNGCFDILH…AIIQNIMAKQ (132 aa)) form a cytidylyltransferase region.

In the N-terminal section; belongs to the carbohydrate kinase PfkB family. It in the C-terminal section; belongs to the cytidylyltransferase family. Homodimer.

The catalysed reaction is D-glycero-beta-D-manno-heptose 7-phosphate + ATP = D-glycero-beta-D-manno-heptose 1,7-bisphosphate + ADP + H(+). It carries out the reaction D-glycero-beta-D-manno-heptose 1-phosphate + ATP + H(+) = ADP-D-glycero-beta-D-manno-heptose + diphosphate. It functions in the pathway nucleotide-sugar biosynthesis; ADP-L-glycero-beta-D-manno-heptose biosynthesis; ADP-L-glycero-beta-D-manno-heptose from D-glycero-beta-D-manno-heptose 7-phosphate: step 1/4. It participates in nucleotide-sugar biosynthesis; ADP-L-glycero-beta-D-manno-heptose biosynthesis; ADP-L-glycero-beta-D-manno-heptose from D-glycero-beta-D-manno-heptose 7-phosphate: step 3/4. Its function is as follows. Catalyzes the phosphorylation of D-glycero-D-manno-heptose 7-phosphate at the C-1 position to selectively form D-glycero-beta-D-manno-heptose-1,7-bisphosphate. Functionally, catalyzes the ADP transfer from ATP to D-glycero-beta-D-manno-heptose 1-phosphate, yielding ADP-D-glycero-beta-D-manno-heptose. In Shewanella sp. (strain MR-4), this protein is Bifunctional protein HldE.